A 197-amino-acid polypeptide reads, in one-letter code: Probable GTP-binding protein EngB (197 aa).

In terms of domain architecture, EngB-type G spans 22–195 (GYPEIALVGR…WNWIEAQAFG (174 aa)). Residues 30-37 (GRSNVGKS), 57-61 (GKTQT), 75-78 (DVPG), 142-145 (TKSD), and 174-176 (FSA) each bind GTP. The Mg(2+) site is built by S37 and T59.

This sequence belongs to the TRAFAC class TrmE-Era-EngA-EngB-Septin-like GTPase superfamily. EngB GTPase family. Requires Mg(2+) as cofactor.

In terms of biological role, necessary for normal cell division and for the maintenance of normal septation. In Levilactobacillus brevis (strain ATCC 367 / BCRC 12310 / CIP 105137 / JCM 1170 / LMG 11437 / NCIMB 947 / NCTC 947) (Lactobacillus brevis), this protein is Probable GTP-binding protein EngB.